The chain runs to 754 residues: tRNA 5-methylaminomethyl-2-thiouridine biosynthesis bifunctional protein MnmC (754 aa).

The tRNA (mnm(5)s(2)U34)-methyltransferase stretch occupies residues 1–320 (MPSCYEHSAQ…RRQAVNNSDS (320 aa)). Positions 324–754 (IGGGIAGACL…RKLLKGKALC (431 aa)) are FAD-dependent cmnm(5)s(2)U34 oxidoreductase.

In the N-terminal section; belongs to the methyltransferase superfamily. tRNA (mnm(5)s(2)U34)-methyltransferase family. The protein in the C-terminal section; belongs to the DAO family. The cofactor is FAD.

It localises to the cytoplasm. The enzyme catalyses 5-aminomethyl-2-thiouridine(34) in tRNA + S-adenosyl-L-methionine = 5-methylaminomethyl-2-thiouridine(34) in tRNA + S-adenosyl-L-homocysteine + H(+). In terms of biological role, catalyzes the last two steps in the biosynthesis of 5-methylaminomethyl-2-thiouridine (mnm(5)s(2)U) at the wobble position (U34) in tRNA. Catalyzes the FAD-dependent demodification of cmnm(5)s(2)U34 to nm(5)s(2)U34, followed by the transfer of a methyl group from S-adenosyl-L-methionine to nm(5)s(2)U34, to form mnm(5)s(2)U34. This chain is tRNA 5-methylaminomethyl-2-thiouridine biosynthesis bifunctional protein MnmC, found in Shewanella denitrificans (strain OS217 / ATCC BAA-1090 / DSM 15013).